The sequence spans 196 residues: uncharacterized protein (196 aa).

Positions 1–27 are cleaved as a signal peptide; sequence MSVLSRAVQLAFVALGLCLFFSNLVAA.

The protein localises to the secreted. This is an uncharacterized protein from Arthroderma benhamiae (strain ATCC MYA-4681 / CBS 112371) (Trichophyton mentagrophytes).